Consider the following 171-residue polypeptide: MAGKSSYDYEELLACARGELFGEGNAQLPYPPMLMFDRITEISETGGAFDKGFIRAEFDIKPDLWFFACHFIGNPIMPGCLGLDALWQLTGFYLGWLGEPGKGMALSTGEVKFKGMVTPSVKKVEYGVDFKRVMRGRLVLGIADGWMKADGEPIYAATDLKVGLSKQSAVA.

H70 is a catalytic residue.

This sequence belongs to the thioester dehydratase family. FabA subfamily. In terms of assembly, homodimer.

Its subcellular location is the cytoplasm. The enzyme catalyses a (3R)-hydroxyacyl-[ACP] = a (2E)-enoyl-[ACP] + H2O. It catalyses the reaction (3R)-hydroxydecanoyl-[ACP] = (2E)-decenoyl-[ACP] + H2O. It carries out the reaction (2E)-decenoyl-[ACP] = (3Z)-decenoyl-[ACP]. Its pathway is lipid metabolism; fatty acid biosynthesis. Necessary for the introduction of cis unsaturation into fatty acids. Catalyzes the dehydration of (3R)-3-hydroxydecanoyl-ACP to E-(2)-decenoyl-ACP and then its isomerization to Z-(3)-decenoyl-ACP. Can catalyze the dehydratase reaction for beta-hydroxyacyl-ACPs with saturated chain lengths up to 16:0, being most active on intermediate chain length. This Mesorhizobium japonicum (strain LMG 29417 / CECT 9101 / MAFF 303099) (Mesorhizobium loti (strain MAFF 303099)) protein is 3-hydroxydecanoyl-[acyl-carrier-protein] dehydratase.